A 379-amino-acid chain; its full sequence is Cytochrome b (379 aa).

4 consecutive transmembrane segments (helical) span residues 33–53 (FGSLLGACLTIQVITGLFLAM), 77–98 (WTIRYLHANGASMFFMCLFIHV), 113–133 (WNIGIMLLFSVMATAFMGYVL), and 178–198 (FFALHFILPFIISALAMIHLL). Positions 83 and 97 each coordinate heme b. Heme b contacts are provided by H182 and H196. H201 serves as a coordination point for a ubiquinone. The next 4 membrane-spanning stretches (helical) occupy residues 226–246 (TKDFLGLLLLILLLMTLTLFY), 288–308 (PGGVVALILSILILAIIPFLQ), 320–340 (LSQFLFWILVADLLTLTWIGG), and 347–367 (FISIGQTASILYFSLMVFIMP).

This sequence belongs to the cytochrome b family. The cytochrome bc1 complex contains 11 subunits: 3 respiratory subunits (MT-CYB, CYC1 and UQCRFS1), 2 core proteins (UQCRC1 and UQCRC2) and 6 low-molecular weight proteins (UQCRH/QCR6, UQCRB/QCR7, UQCRQ/QCR8, UQCR10/QCR9, UQCR11/QCR10 and a cleavage product of UQCRFS1). This cytochrome bc1 complex then forms a dimer. It depends on heme b as a cofactor.

It is found in the mitochondrion inner membrane. Functionally, component of the ubiquinol-cytochrome c reductase complex (complex III or cytochrome b-c1 complex) that is part of the mitochondrial respiratory chain. The b-c1 complex mediates electron transfer from ubiquinol to cytochrome c. Contributes to the generation of a proton gradient across the mitochondrial membrane that is then used for ATP synthesis. The polypeptide is Cytochrome b (MT-CYB) (Lepilemur ruficaudatus (Red-tailed sportive lemur)).